Reading from the N-terminus, the 269-residue chain is MAEVPELASEMMAYYSGNEDDLFFDVDGPKQMKCSFQDLDLCPLGGGIQLQISHEHYNEGFRQAVSVVVAMEKLRKMLVPCPQIFQDNDLSTLIPFIFEEEPVFLDTRNNDACVHDAPVRSLHCTLRDAQLKSLVMSGPYELKALHLQGQDLEQQVVFSMSFVQGEESNDKIPVALGLKAKNLYLSCVLKDDKPTLQLESVDPKNYPKKKMEKRFVFNKIEINNKLEFESAQFPNWYISTSQAENMPVFLGGTRGGQDITDFTMQFVSS.

The propeptide occupies 1–116; sequence MAEVPELASE…TRNNDACVHD (116 aa).

The protein belongs to the IL-1 family. In terms of assembly, monomer. In its precursor form, weakly interacts with full-length MEFV; the mature cytokine does not interact at all. Interacts with integrins ITGAV:ITGBV and ITGA5:ITGB1; integrin-binding is required for IL1B signaling. Interacts with cargo receptor TMED10; the interaction is direct and is required for the secretion of IL1B mature form. Interacts with HSP90AB1; the interaction facilitates cargo translocation into the ERGIC. Interacts with HSP90B1; the interaction facilitates cargo translocation into the ERGIC.

It localises to the cytoplasm. It is found in the cytosol. The protein localises to the secreted. Its subcellular location is the lysosome. The protein resides in the extracellular exosome. Potent pro-inflammatory cytokine. Initially discovered as the major endogenous pyrogen, induces prostaglandin synthesis, neutrophil influx and activation, T-cell activation and cytokine production, B-cell activation and antibody production, and fibroblast proliferation and collagen production. Promotes Th17 differentiation of T-cells. Synergizes with IL12/interleukin-12 to induce IFNG synthesis from T-helper 1 (Th1) cells. Plays a role in angiogenesis by inducing VEGF production synergistically with TNF and IL6. Involved in transduction of inflammation downstream of pyroptosis: its mature form is specifically released in the extracellular milieu by passing through the gasdermin-D (GSDMD) pore. This Macaca mulatta (Rhesus macaque) protein is Interleukin-1 beta (IL1B).